The primary structure comprises 496 residues: Alanine aminotransferase 1 (496 aa).

Ala2 bears the N-acetylalanine mark. Residue Thr22 is modified to Phosphothreonine. N6-(pyridoxal phosphate)lysine is present on Lys314.

This sequence belongs to the class-I pyridoxal-phosphate-dependent aminotransferase family. Alanine aminotransferase subfamily. In terms of assembly, homodimer. The cofactor is pyridoxal 5'-phosphate. As to expression, mainly expressed in liver, intestine, colon and white adipose tissue.

The protein localises to the cytoplasm. The catalysed reaction is L-alanine + 2-oxoglutarate = pyruvate + L-glutamate. The protein operates within amino-acid degradation; L-alanine degradation via transaminase pathway; pyruvate from L-alanine: step 1/1. Catalyzes the reversible transamination between alanine and 2-oxoglutarate to form pyruvate and glutamate. Participates in cellular nitrogen metabolism and also in liver gluconeogenesis starting with precursors transported from skeletal muscles. The sequence is that of Alanine aminotransferase 1 (Gpt) from Mus musculus (Mouse).